A 399-amino-acid polypeptide reads, in one-letter code: UDP-N-acetylglucosamine--N-acetylmuramyl-(pentapeptide) pyrophosphoryl-undecaprenol N-acetylglucosamine transferase (399 aa).

The segment at 1–31 is disordered; the sequence is MTSRFGHSQHPRRGRSARARAGRREGVQSNF. Residues 7-21 are compositionally biased toward basic residues; that stretch reads HSQHPRRGRSARARA. UDP-N-acetyl-alpha-D-glucosamine-binding positions include 58-60, Asn170, Arg206, Ser234, Ile288, and Gln333; that span reads TGG.

Belongs to the glycosyltransferase 28 family. MurG subfamily.

The protein localises to the cell inner membrane. It carries out the reaction di-trans,octa-cis-undecaprenyl diphospho-N-acetyl-alpha-D-muramoyl-L-alanyl-D-glutamyl-meso-2,6-diaminopimeloyl-D-alanyl-D-alanine + UDP-N-acetyl-alpha-D-glucosamine = di-trans,octa-cis-undecaprenyl diphospho-[N-acetyl-alpha-D-glucosaminyl-(1-&gt;4)]-N-acetyl-alpha-D-muramoyl-L-alanyl-D-glutamyl-meso-2,6-diaminopimeloyl-D-alanyl-D-alanine + UDP + H(+). The protein operates within cell wall biogenesis; peptidoglycan biosynthesis. Cell wall formation. Catalyzes the transfer of a GlcNAc subunit on undecaprenyl-pyrophosphoryl-MurNAc-pentapeptide (lipid intermediate I) to form undecaprenyl-pyrophosphoryl-MurNAc-(pentapeptide)GlcNAc (lipid intermediate II). This chain is UDP-N-acetylglucosamine--N-acetylmuramyl-(pentapeptide) pyrophosphoryl-undecaprenol N-acetylglucosamine transferase, found in Acidovorax sp. (strain JS42).